We begin with the raw amino-acid sequence, 750 residues long: Photosystem I P700 chlorophyll a apoprotein A1 (750 aa).

Transmembrane regions (helical) follow at residues 70 to 93, 156 to 179, 195 to 219, 291 to 309, 346 to 369, 385 to 411, 433 to 455, and 531 to 549; these read VFSA…FHGA, LYCT…FHYH, LNHH…HVSL, IAHH…GHMY, WHAQ…HHMY, LSLF…IFMV, AIIS…LYIH, and FLVH…LILL. [4Fe-4S] cluster is bound by residues cysteine 573 and cysteine 582. 2 consecutive transmembrane segments (helical) span residues 589-610 and 664-686; these read HVFL…HFSW and LSAY…MFLF. Histidine 675 is a binding site for chlorophyll a'. 2 residues coordinate chlorophyll a: methionine 683 and tyrosine 691. Tryptophan 692 contributes to the phylloquinone binding site. A helical transmembrane segment spans residues 724–744; it reads TVGVTHYLLGGIATTWAFFLA.

The protein belongs to the PsaA/PsaB family. In terms of assembly, the PsaA/B heterodimer binds the P700 chlorophyll special pair and subsequent electron acceptors. PSI consists of a core antenna complex that captures photons, and an electron transfer chain that converts photonic excitation into a charge separation. The eukaryotic PSI reaction center is composed of at least 11 subunits. The cofactor is P700 is a chlorophyll a/chlorophyll a' dimer, A0 is one or more chlorophyll a, A1 is one or both phylloquinones and FX is a shared 4Fe-4S iron-sulfur center..

Its subcellular location is the plastid. The protein resides in the chloroplast thylakoid membrane. The catalysed reaction is reduced [plastocyanin] + hnu + oxidized [2Fe-2S]-[ferredoxin] = oxidized [plastocyanin] + reduced [2Fe-2S]-[ferredoxin]. PsaA and PsaB bind P700, the primary electron donor of photosystem I (PSI), as well as the electron acceptors A0, A1 and FX. PSI is a plastocyanin-ferredoxin oxidoreductase, converting photonic excitation into a charge separation, which transfers an electron from the donor P700 chlorophyll pair to the spectroscopically characterized acceptors A0, A1, FX, FA and FB in turn. Oxidized P700 is reduced on the lumenal side of the thylakoid membrane by plastocyanin. This is Photosystem I P700 chlorophyll a apoprotein A1 from Oenothera elata subsp. hookeri (Hooker's evening primrose).